The chain runs to 389 residues: Acetylornithine aminotransferase (389 aa).

Residues Gly96–Thr97 and Phe123 each bind pyridoxal 5'-phosphate. Residue Arg126 participates in N(2)-acetyl-L-ornithine binding. Residue Asp207–Gln210 coordinates pyridoxal 5'-phosphate. The residue at position 236 (Lys236) is an N6-(pyridoxal phosphate)lysine. Ser264 contacts N(2)-acetyl-L-ornithine. Thr265 contacts pyridoxal 5'-phosphate.

Belongs to the class-III pyridoxal-phosphate-dependent aminotransferase family. ArgD subfamily. Homodimer. It depends on pyridoxal 5'-phosphate as a cofactor.

Its subcellular location is the cytoplasm. It catalyses the reaction N(2)-acetyl-L-ornithine + 2-oxoglutarate = N-acetyl-L-glutamate 5-semialdehyde + L-glutamate. The protein operates within amino-acid biosynthesis; L-arginine biosynthesis; N(2)-acetyl-L-ornithine from L-glutamate: step 4/4. In Lactiplantibacillus plantarum (strain ATCC BAA-793 / NCIMB 8826 / WCFS1) (Lactobacillus plantarum), this protein is Acetylornithine aminotransferase.